The sequence spans 177 residues: FMRFamide-related peptides (177 aa).

Positions methionine 1–serine 21 are cleaved as a signal peptide. Residues threonine 22 to alanine 32 constitute a propeptide that is removed on maturation. Phenylalanine 45 bears the Phenylalanine amide mark. The propeptide occupies arginine 47–serine 93. Phenylalanine 102 and phenylalanine 111 each carry phenylalanine amide. Positions arginine 113–glutamine 131 are excised as a propeptide. The residue at position 143 (leucine 143) is a Leucine amide. The propeptide occupies arginine 145–alanine 177. The segment at arginine 145–alanine 177 is disordered. Residues leucine 149–tyrosine 158 show a composition bias toward acidic residues. The span at glutamate 159–valine 169 shows a compositional bias: basic and acidic residues.

The protein belongs to the FARP (FMRFamide related peptide) family. Only expressed in the CNS and predominantly in the thoracic ganglia. Strongest expression is seen in two pairs of large neurons in each thoracic ganglion. These neurons are ventrolateral neurosecretory cells 1 and 2, they project their axons through transverse nerves into the periphery where axons from the prothoracic ganglion innervate the prothoracic gland.

The protein resides in the secreted. In terms of biological role, regulates ecdysteroidogenesis by direct innervation of the prothoracic gland by reducing cAMP production via the receptor for myosuppressin. The neurons that innervate the prothoracic gland during the fifth instar are most active during days 0-4, after which they reduce and then peak again on day 6. Expression suppresses the biosynthesis of steroid hormones called ecdysteroids that elicit molting and metamorphosis. This Bombyx mori (Silk moth) protein is FMRFamide-related peptides.